A 65-amino-acid polypeptide reads, in one-letter code: Large ribosomal subunit protein bL31 (65 aa).

Residues cysteine 16, cysteine 18, cysteine 36, and cysteine 39 each coordinate Zn(2+).

The protein belongs to the bacterial ribosomal protein bL31 family. Type A subfamily. In terms of assembly, part of the 50S ribosomal subunit. The cofactor is Zn(2+).

In terms of biological role, binds the 23S rRNA. The chain is Large ribosomal subunit protein bL31 from Alkaliphilus metalliredigens (strain QYMF).